The sequence spans 399 residues: Argininosuccinate synthase (399 aa).

An ATP-binding site is contributed by 8–16 (AYSGGLDTT). Position 87 (tyrosine 87) interacts with L-citrulline. Position 117 (glycine 117) interacts with ATP. Positions 119, 123, and 124 each coordinate L-aspartate. Asparagine 123 provides a ligand contact to L-citrulline. Residues arginine 127, serine 175, glutamate 259, and tyrosine 271 each contribute to the L-citrulline site.

It belongs to the argininosuccinate synthase family. Type 1 subfamily. Homotetramer.

The protein resides in the cytoplasm. It carries out the reaction L-citrulline + L-aspartate + ATP = 2-(N(omega)-L-arginino)succinate + AMP + diphosphate + H(+). The protein operates within amino-acid biosynthesis; L-arginine biosynthesis; L-arginine from L-ornithine and carbamoyl phosphate: step 2/3. The sequence is that of Argininosuccinate synthase from Corynebacterium urealyticum (strain ATCC 43042 / DSM 7109).